The primary structure comprises 631 residues: 1-deoxy-D-xylulose-5-phosphate synthase (631 aa).

Residues His-73 and 114 to 116 each bind thiamine diphosphate; that span reads SHA. Asp-145 is a Mg(2+) binding site. Thiamine diphosphate contacts are provided by residues 146-147, Asn-175, Tyr-286, and Glu-368; that span reads GA. Residue Asn-175 coordinates Mg(2+).

Belongs to the transketolase family. DXPS subfamily. Homodimer. Mg(2+) serves as cofactor. Requires thiamine diphosphate as cofactor.

It carries out the reaction D-glyceraldehyde 3-phosphate + pyruvate + H(+) = 1-deoxy-D-xylulose 5-phosphate + CO2. It functions in the pathway metabolic intermediate biosynthesis; 1-deoxy-D-xylulose 5-phosphate biosynthesis; 1-deoxy-D-xylulose 5-phosphate from D-glyceraldehyde 3-phosphate and pyruvate: step 1/1. Its function is as follows. Catalyzes the acyloin condensation reaction between C atoms 2 and 3 of pyruvate and glyceraldehyde 3-phosphate to yield 1-deoxy-D-xylulose-5-phosphate (DXP). The sequence is that of 1-deoxy-D-xylulose-5-phosphate synthase from Nocardia farcinica (strain IFM 10152).